A 350-amino-acid chain; its full sequence is Protein SGT1 homolog A (350 aa).

TPR repeat units follow at residues 2–35 (AKEL…DPNC), 37–69 (EFFA…DPSL), and 71–103 (KAYL…TPSE). In terms of domain architecture, CS spans 149 to 238 (TAKYRHEYYQ…ADIITWASLE (90 aa)). The SGS domain occupies 260–350 (AYPSSKKVKD…DGMELKKWEI (91 aa)).

This sequence belongs to the SGT1 family. As to quaternary structure, interacts with RAR1. Forms a ternary complex with RAR1 and barley HSP90.

Functions in R gene-mediated resistance, but participates in a lower extent than SGT1B to RPP5-mediated resistance. Not required for RPM1, RPS2, RPS4 and RPS5-mediated resistance. Probably required for SCF-mediated ubiquitination, by coupling HSP90 to SCF complex for ubiquitination of HSP90 client proteins. This Arabidopsis thaliana (Mouse-ear cress) protein is Protein SGT1 homolog A (SGT1A).